Here is an 87-residue protein sequence, read N- to C-terminus: Toxin Cll4 (87 aa).

A signal peptide spans 1–19 (MNSLLMITACLALIGTVWA). Residues 20–85 (KEGYIVNYHD…VWPLPKKRCN (66 aa)) enclose the LCN-type CS-alpha/beta domain. 4 disulfides stabilise this stretch: Cys-31/Cys-84, Cys-35/Cys-60, Cys-44/Cys-65, and Cys-48/Cys-67. At Asn-85 the chain carries Asparagine amide.

This sequence belongs to the long (4 C-C) scorpion toxin superfamily. Sodium channel inhibitor family. Beta subfamily. In terms of tissue distribution, expressed by the venom gland.

The protein resides in the secreted. Its function is as follows. Beta toxins bind voltage-independently at site-4 of sodium channels (Nav) and shift the voltage of activation toward more negative potentials thereby affecting sodium channel activation and promoting spontaneous and repetitive firing. This is Toxin Cll4 from Centruroides limpidus (Mexican scorpion).